The following is an 86-amino-acid chain: Cerebrin prohormone (86 aa).

The first 27 residues, 1 to 27, serve as a signal peptide directing secretion; sequence MFGYRSLLVLLVTLSLCLLLQSSHCSA. Positions 28–64 are excised as a propeptide; sequence VRTYGNDLDARARREIISLAARLIKLSMYGPEDDSFV. Ile-83 carries the isoleucine amide modification.

As to expression, expressed only in cerebral ganglion.

The protein localises to the secreted. Functionally, may function as a hormone and may play a neuromodulatory role. The polypeptide is Cerebrin prohormone (CBPH) (Aplysia californica (California sea hare)).